The chain runs to 207 residues: Small ribosomal subunit protein uS4c (207 aa).

Residues 92–156 enclose the S4 RNA-binding domain; it reads MRLDNILFRL…YQSIITKRIE (65 aa).

This sequence belongs to the universal ribosomal protein uS4 family. In terms of assembly, part of the 30S ribosomal subunit. Contacts protein S5. The interaction surface between S4 and S5 is involved in control of translational fidelity.

It localises to the plastid. It is found in the chloroplast. Its function is as follows. One of the primary rRNA binding proteins, it binds directly to 16S rRNA where it nucleates assembly of the body of the 30S subunit. With S5 and S12 plays an important role in translational accuracy. The chain is Small ribosomal subunit protein uS4c (rps4) from Equisetum pratense (Meadow horsetail).